Here is a 299-residue protein sequence, read N- to C-terminus: 4-hydroxy-tetrahydrodipicolinate synthase (299 aa).

Thr44 serves as a coordination point for pyruvate. Catalysis depends on Tyr133, which acts as the Proton donor/acceptor. Catalysis depends on Lys162, which acts as the Schiff-base intermediate with substrate. Ile204 is a pyruvate binding site.

Belongs to the DapA family. Homotetramer; dimer of dimers.

Its subcellular location is the cytoplasm. It carries out the reaction L-aspartate 4-semialdehyde + pyruvate = (2S,4S)-4-hydroxy-2,3,4,5-tetrahydrodipicolinate + H2O + H(+). The protein operates within amino-acid biosynthesis; L-lysine biosynthesis via DAP pathway; (S)-tetrahydrodipicolinate from L-aspartate: step 3/4. Catalyzes the condensation of (S)-aspartate-beta-semialdehyde [(S)-ASA] and pyruvate to 4-hydroxy-tetrahydrodipicolinate (HTPA). The protein is 4-hydroxy-tetrahydrodipicolinate synthase of Thermus thermophilus (strain ATCC BAA-163 / DSM 7039 / HB27).